The primary structure comprises 424 residues: UPF0761 membrane protein Smal_0716 (424 aa).

6 consecutive transmembrane segments (helical) span residues 48–68 (VFAL…FPVF), 101–121 (SAGQ…LITL), 144–164 (FLVY…SLAV), 181–201 (WLAD…CITL), 216–236 (AVPG…GIGA), and 251–271 (VAFV…VLLG).

This sequence belongs to the UPF0761 family.

The protein localises to the cell inner membrane. The polypeptide is UPF0761 membrane protein Smal_0716 (Stenotrophomonas maltophilia (strain R551-3)).